Here is a 181-residue protein sequence, read N- to C-terminus: Adenylate kinase (181 aa).

Residue 10–15 (GAGKGT) participates in ATP binding. The tract at residues 30–59 (STGELFRKNIQDGTKLGVEAKRYLDAGDLV) is NMP. Residues Thr31, Arg36, 57–59 (DLV), 85–88 (GYPR), and Gln92 each bind AMP. An LID region spans residues 126-132 (GRGRADD). Arg127 provides a ligand contact to ATP. The AMP site is built by Arg129 and Arg140. Gly166 is a binding site for ATP.

Belongs to the adenylate kinase family. Monomer.

It localises to the cytoplasm. It carries out the reaction AMP + ATP = 2 ADP. It participates in purine metabolism; AMP biosynthesis via salvage pathway; AMP from ADP: step 1/1. Catalyzes the reversible transfer of the terminal phosphate group between ATP and AMP. Plays an important role in cellular energy homeostasis and in adenine nucleotide metabolism. This Mycobacterium ulcerans (strain Agy99) protein is Adenylate kinase.